A 737-amino-acid chain; its full sequence is Angiotensin-converting enzyme-like protein Ace3 (737 aa).

An N-terminal signal peptide occupies residues 1-23; the sequence is MNLPWALLLVLLSHRQLLPWLRT. Residues 24–639 are Extracellular-facing; that stretch reads VGETSLNDFY…TDTEPEQAYL (616 aa). In terms of domain architecture, Peptidase M2 spans 32-611; sequence FYSEAQAKLF…VKQGDTLGWP (580 aa). Cys-146 and Cys-152 are disulfide-bonded. The chloride site is built by Arg-180 and Tyr-218. A disulfide bridge links Cys-346 with Cys-364. Zn(2+) is bound by residues His-377 and His-381. The N-linked (GlcNAc...) asparagine glycan is linked to Asn-390. Residue Glu-405 coordinates Zn(2+). 3 residues coordinate chloride: Trp-479, Arg-483, and Arg-516. Cysteines 532 and 544 form a disulfide. The chain crosses the membrane as a helical span at residues 640–660; that stretch reads GQWVLLSMSFFMLVLILALGF. At 661-700 the chain is on the cytoplasmic side; sequence RLHYLEKQLLDEDTMILKTLPYSYFLGIAMEPHQAARKQW. The helical transmembrane segment at 701-721 threads the bilayer; that stretch reads LLLGLCCILMLCCIGLLIRIV. The Extracellular segment spans residues 722 to 737; that stretch reads TQNTENTPWMKNEGQS.

This sequence belongs to the peptidase M2 family. In terms of assembly, interacts with IZUMO1. Zn(2+) is required as a cofactor. Expressed in sperm and testis (at protein level). Expressed in heart and testis. Not detected in kidney, lung, liver, brain, ovary, spleen and thymus.

Its subcellular location is the cytoplasmic vesicle. The protein resides in the secretory vesicle. It localises to the acrosome membrane. The sequence is that of Angiotensin-converting enzyme-like protein Ace3 from Mus musculus (Mouse).